The chain runs to 213 residues: Large ribosomal subunit protein uL3 (213 aa).

This sequence belongs to the universal ribosomal protein uL3 family. In terms of assembly, part of the 50S ribosomal subunit. Forms a cluster with proteins L14 and L19.

Functionally, one of the primary rRNA binding proteins, it binds directly near the 3'-end of the 23S rRNA, where it nucleates assembly of the 50S subunit. The polypeptide is Large ribosomal subunit protein uL3 (Desulforudis audaxviator (strain MP104C)).